The chain runs to 260 residues: MVKRSQRVEKKAVEVNRGTWTAEEDEKLMNYVSAHGDKKWRMLPAKAGLKRCGKSCRLRWLNYLRPGIKRGNISEDEEDLIIRLHNLLGNRWSIIAGRIPGRTDNEIKNHWNTHLSKRSLTIEDLNKKHNPGIDNIDILPPTKITLTSSSDTFPVTPVCQTDQASDTNKNDVLVDSWTDLSGPDFDLEQFLSLLPMSDLCPGSNGNELEFDDFGIPRHDSKQDSFRSNDYNINYQECLDSQVWSCAFEYDDLDQFLDCQS.

HTH myb-type domains follow at residues 12–64 (AVEV…LNYL) and 65–119 (RPGI…SKRS). DNA-binding regions (H-T-H motif) lie at residues 40 to 64 (WRML…LNYL) and 92 to 115 (WSII…NTHL).

It localises to the nucleus. In terms of biological role, transcription activator involved in the spatiotemporal regulation of flavonoid biosynthesis specifically in the corms of Montbretia. Activates the promoters of enzymes involved in the biosynthesis of the flavonol myricetin and the flavonol-glycoside montbretin A (MbA). MbA is a potent inhibitor of human pancreatic alpha-amylase and is being developed as drug candidate to treat type-2 diabetes. The sequence is that of Transcription factor MYB4 from Crocosmia x crocosmiiflora (Montbretia).